The chain runs to 359 residues: Medium-wave-sensitive opsin 1 (359 aa).

Topologically, residues 1–47 are extracellular; the sequence is MAQQLTGEQTLDHYEDSTQASIFTYTNSNSTRGPFEGPNYHIAPRWV. Positions 12–38 are required for 11-cis-retinal regeneration; it reads DHYEDSTQASIFTYTNSNSTRGPFEGP. The N-linked (GlcNAc...) asparagine glycan is linked to Asn-29. A helical membrane pass occupies residues 48–72; the sequence is YHLTSTWMILVVIASVFTNGLVLAA. Residues 73–84 are Cytoplasmic-facing; it reads TMRFKKLRHPLN. A helical membrane pass occupies residues 85-110; it reads WILVNLAVADLAETIIASTISVVNQI. Residues 111–124 lie on the Extracellular side of the membrane; sequence YGYFVLGHPLCVIE. A disulfide bridge links Cys-121 with Cys-198. A helical membrane pass occupies residues 125 to 144; it reads GYIVSLCGITGLWSLAIISW. Over 145–163 the chain is Cytoplasmic; the sequence is ERWLVVCKPFGNVRFDAKL. A helical transmembrane segment spans residues 164–187; sequence ATVGIVFSWVWAAVWTAPPIFGWS. Residues 188 to 213 are Extracellular-facing; the sequence is RYWPYGLKTSCGPDVFSGTSYPGVQS. A helical transmembrane segment spans residues 214-241; that stretch reads YMMVLMVTCCIFPLSIIVLCYLQVWLAI. Residues 242–263 lie on the Cytoplasmic side of the membrane; the sequence is RAVAKQQKESESTQKAEKEVTR. The chain crosses the membrane as a helical span at residues 264 to 287; it reads MVVVMVFAYCLCWGPYTFFACFAT. Over 288-295 the chain is Extracellular; sequence AHPGYAFH. The helical transmembrane segment at 296–320 threads the bilayer; sequence PLVASLPSYFAKSATIYNPIIYVFM. Position 307 is an N6-(retinylidene)lysine (Lys-307). Residues 321–359 lie on the Cytoplasmic side of the membrane; the sequence is NRQFRNCILQLFGKKVDDSSELSSTSKTEVSSVSSVSPA.

This sequence belongs to the G-protein coupled receptor 1 family. Opsin subfamily. Monomer. Homodimer. Homotetramer. In terms of processing, O-glycosylated. Post-translationally, phosphorylated on some or all of the serine and threonine residues present in the C-terminal region. As to expression, expressed in cone photoreceptor cells.

It localises to the membrane. Functionally, visual pigments are the light-absorbing molecules that mediate vision. They consist of an apoprotein, opsin, covalently linked to cis-retinal. May increase spectral sensitivity in dim light. The polypeptide is Medium-wave-sensitive opsin 1 (Opn1mw) (Rattus norvegicus (Rat)).